The chain runs to 168 residues: Phosphopantetheine adenylyltransferase (168 aa).

Thr-9 lines the substrate pocket. Residues 9–10 (TF) and His-17 each bind ATP. Substrate-binding residues include Lys-41, Leu-73, and Arg-87. ATP-binding positions include 88-90 (GLR), Glu-98, and 123-129 (YQFISGT).

It belongs to the bacterial CoaD family. As to quaternary structure, homohexamer. It depends on Mg(2+) as a cofactor.

It localises to the cytoplasm. The catalysed reaction is (R)-4'-phosphopantetheine + ATP + H(+) = 3'-dephospho-CoA + diphosphate. The protein operates within cofactor biosynthesis; coenzyme A biosynthesis; CoA from (R)-pantothenate: step 4/5. Its function is as follows. Reversibly transfers an adenylyl group from ATP to 4'-phosphopantetheine, yielding dephospho-CoA (dPCoA) and pyrophosphate. The sequence is that of Phosphopantetheine adenylyltransferase from Ralstonia nicotianae (strain ATCC BAA-1114 / GMI1000) (Ralstonia solanacearum).